We begin with the raw amino-acid sequence, 440 residues long: L-gulonolactone oxidase (440 aa).

An FAD-binding PCMH-type domain is found at 17 to 187; it reads YSCEPELYFE…LNVTIQCVPA (171 aa). A Pros-8alpha-FAD histidine modification is found at His54. Residues 245 to 267 form a helical membrane-spanning segment; that stretch reads WFWNYAIGYYLLEFLLWISVFVP.

Belongs to the oxygen-dependent FAD-linked oxidoreductase family. It depends on FAD as a cofactor.

The protein resides in the microsome membrane. Its subcellular location is the endoplasmic reticulum membrane. It catalyses the reaction L-gulono-1,4-lactone + O2 = L-ascorbate + H2O2 + H(+). It participates in cofactor biosynthesis; L-ascorbate biosynthesis via UDP-alpha-D-glucuronate pathway; L-ascorbate from UDP-alpha-D-glucuronate: step 4/4. In terms of biological role, oxidizes L-gulono-1,4-lactone to hydrogen peroxide and L-xylo-hexulonolactone which spontaneously isomerizes to L-ascorbate. The polypeptide is L-gulonolactone oxidase (GULO) (Scyliorhinus torazame (Cloudy catshark)).